Reading from the N-terminus, the 363-residue chain is UDP-N-acetylenolpyruvoylglucosamine reductase (363 aa).

One can recognise an FAD-binding PCMH-type domain in the interval 25-201 (IGPVARRMLT…RSAPVRYREL (177 aa)). The active site involves arginine 168. Serine 249 (proton donor) is an active-site residue. Glutamate 352 is a catalytic residue.

Belongs to the MurB family. Requires FAD as cofactor.

It is found in the cytoplasm. It catalyses the reaction UDP-N-acetyl-alpha-D-muramate + NADP(+) = UDP-N-acetyl-3-O-(1-carboxyvinyl)-alpha-D-glucosamine + NADPH + H(+). It functions in the pathway cell wall biogenesis; peptidoglycan biosynthesis. Functionally, cell wall formation. The polypeptide is UDP-N-acetylenolpyruvoylglucosamine reductase (Mycolicibacterium smegmatis (strain ATCC 700084 / mc(2)155) (Mycobacterium smegmatis)).